The primary structure comprises 461 residues: Cyclin-A2-4 (461 aa).

Belongs to the cyclin family. Cyclin AB subfamily.

This chain is Cyclin-A2-4 (CYCA2-4), found in Arabidopsis thaliana (Mouse-ear cress).